Consider the following 288-residue polypeptide: Bifunctional protein FolD (288 aa).

Residues 166–168 and Ile232 each bind NADP(+); that span reads GAS.

This sequence belongs to the tetrahydrofolate dehydrogenase/cyclohydrolase family. In terms of assembly, homodimer.

It carries out the reaction (6R)-5,10-methylene-5,6,7,8-tetrahydrofolate + NADP(+) = (6R)-5,10-methenyltetrahydrofolate + NADPH. It catalyses the reaction (6R)-5,10-methenyltetrahydrofolate + H2O = (6R)-10-formyltetrahydrofolate + H(+). Its pathway is one-carbon metabolism; tetrahydrofolate interconversion. Catalyzes the oxidation of 5,10-methylenetetrahydrofolate to 5,10-methenyltetrahydrofolate and then the hydrolysis of 5,10-methenyltetrahydrofolate to 10-formyltetrahydrofolate. This chain is Bifunctional protein FolD, found in Erwinia tasmaniensis (strain DSM 17950 / CFBP 7177 / CIP 109463 / NCPPB 4357 / Et1/99).